A 438-amino-acid polypeptide reads, in one-letter code: Adenylosuccinate synthetase (438 aa).

Residues 13–19 (GDEGKGK) and 41–43 (GHT) contribute to the GTP site. Residue Asp-14 is the Proton acceptor of the active site. Positions 14 and 41 each coordinate Mg(2+). IMP is bound by residues 14 to 17 (DEGK), 39 to 42 (NAGH), Thr-130, Arg-144, Gln-225, Thr-240, and Arg-310. The active-site Proton donor is the His-42. 306–312 (ATTGRLR) serves as a coordination point for substrate. Residues Arg-312, 338–340 (KLD), and 421–423 (STG) contribute to the GTP site.

It belongs to the adenylosuccinate synthetase family. Homodimer. Mg(2+) is required as a cofactor.

It localises to the cytoplasm. It carries out the reaction IMP + L-aspartate + GTP = N(6)-(1,2-dicarboxyethyl)-AMP + GDP + phosphate + 2 H(+). It participates in purine metabolism; AMP biosynthesis via de novo pathway; AMP from IMP: step 1/2. Its function is as follows. Plays an important role in the de novo pathway of purine nucleotide biosynthesis. Catalyzes the first committed step in the biosynthesis of AMP from IMP. In Vibrio vulnificus (strain YJ016), this protein is Adenylosuccinate synthetase.